Consider the following 74-residue polypeptide: Translation initiation factor IF-1 (74 aa).

Positions Met1–Lys73 constitute an S1-like domain.

It belongs to the IF-1 family. As to quaternary structure, component of the 30S ribosomal translation pre-initiation complex which assembles on the 30S ribosome in the order IF-2 and IF-3, IF-1 and N-formylmethionyl-tRNA(fMet); mRNA recruitment can occur at any time during PIC assembly.

Its subcellular location is the cytoplasm. Functionally, one of the essential components for the initiation of protein synthesis. Stabilizes the binding of IF-2 and IF-3 on the 30S subunit to which N-formylmethionyl-tRNA(fMet) subsequently binds. Helps modulate mRNA selection, yielding the 30S pre-initiation complex (PIC). Upon addition of the 50S ribosomal subunit IF-1, IF-2 and IF-3 are released leaving the mature 70S translation initiation complex. In Thermosipho melanesiensis (strain DSM 12029 / CIP 104789 / BI429), this protein is Translation initiation factor IF-1.